The sequence spans 930 residues: Urea transporter 2 (930 aa).

Basic and acidic residues predominate over residues 1–11; sequence MSDHHPLKEMS. The disordered stretch occupies residues 1–90; the sequence is MSDHHPLKEM…KRRESEVSRR (90 aa). Low complexity-rich tracts occupy residues 12–25 and 32–43; these read DSNS…PLSS and SELSSPTWPSSS. Residues 56–89 are compositionally biased toward basic and acidic residues; it reads PEEKDLRSSDEDSHIVKIEKPNERNKRRESEVSR. The next 8 helical transmembrane spans lie at 145–165, 185–205, 213–233, 242–262, 280–300, 311–331, 350–372, and 401–421; these read ISGL…TIAG, AIAS…MAVF, WWLL…SSAL, LPVF…ATGH, NITW…VGVG, GGVI…HAAI, IYLG…MFYA, and VVGV…FLLL. Positions 452 to 479 are disordered; it reads SEEEKSPNGGSGEQSHGSGQWKAEESSE. A Phosphoserine modification is found at Ser487. The next 4 helical transmembrane spans lie at 610-630, 648-668, 676-696, and 705-725; these read GILI…SGCL, AIAA…MAVF, WWLL…SSAL, and LPVF…ATGH. N-linked (GlcNAc...) asparagine glycosylation is present at Asn743. The next 4 membrane-spanning stretches (helical) occupy residues 774 to 794, 813 to 833, 842 to 862, and 864 to 884; these read GGIF…HAAI, IYFG…GGMF, LLAI…ANML, and VFGL…FLLL.

The protein belongs to the urea transporter family. As to expression, highly expressed in kidney medulla (at protein level). Also detected in testes, heart, brain and liver (at protein level). In the kidney, present in thin descending limbs of the loop of Henle and in the middle and terminal inner medullary collecting ducts. In terms of tissue distribution, expressed in the kidney medulla. Expressed in the peritubular myoid cells forming the outermost layer of the seminiferous tubules within the testes and is not detected in kidney. Expression levels are coordinated with the stage of testes development and increase 15 days postpartum, commensurate with the start of seminiferous tubule fluid movement.

It localises to the apical cell membrane. Its subcellular location is the basolateral cell membrane. The enzyme catalyses urea(in) = urea(out). Its activity is regulated as follows. Inhibited by phloretin. Activated by forskolin, 3-isobutyl-1-methylxanthine (IBMX) and cAMP. With respect to regulation, inhibited by phloretin. Inhibited by phloretin. Activated by forskolin, 3-isobutyl-1-methylxanthine (IBMX) and cAMP. In terms of biological role, mediates the transport of urea driven by a concentration gradient across the cell membrane of the renal inner medullary collecting duct which is critical to the urinary concentrating mechanism. Its function is as follows. Mediates the transport of urea driven by a concentration gradient across the cell membrane. Implicated in the urea movement across the blood-testis barrier and does not translocate water. The sequence is that of Urea transporter 2 (Slc14a2) from Mus musculus (Mouse).